We begin with the raw amino-acid sequence, 159 residues long: Nanos homolog 3 (159 aa).

Residues Gln-42–Ala-87 form a disordered region. The segment at Phe-91–Met-145 adopts a Nanos-type zinc-finger fold. Positions 92, 95, 108, 119, 127, 130, 138, and 143 each coordinate Zn(2+). 2 consecutive short sequence motifs (C2HC) follow at residues Cys-92 to Cys-119 and Cys-127 to Cys-143. Positions Cys-92 to Trp-159 are interaction with mylpfa.

Belongs to the nanos family. In terms of assembly, interacts (via C-terminus) with myosin mylpfa/mylz2; the interaction negatively regulates mylpfa phosphorylation. In terms of tissue distribution, in the embryo, displays early ubiquitous expression before being restricted to primordial germ cells in a 3'-UTR-dependent manner. Expressed in early stage germ cells in larval and adult ovaries.

The protein resides in the cytoplasm. The protein localises to the perinuclear region. RNA-binding protein which binds to RNA with no sequence specificity. Probably represses translation of specific mRNAs. Essential for the development of primordial germ cells (PGCs) by ensuring their proper migration and survival but is not required for PGC specification. Also required to maintain oocyte production in the adult ovary. Negatively regulates phosphorylation of myosin mylpfa/mylz2. This chain is Nanos homolog 3, found in Danio rerio (Zebrafish).